A 405-amino-acid polypeptide reads, in one-letter code: Obg-like ATPase homolog (405 aa).

Positions 17-283 constitute an OBG-type G domain; that stretch reads PTSGIVGLAN…CKGIASEYFD (267 aa). ATP is bound by residues 26 to 31 and Val-231; that span reads NVGKST. The 87-residue stretch at 312–398 folds into the TGS domain; sequence NLISFFTCGP…QDNDIALFKA (87 aa).

This sequence belongs to the TRAFAC class OBG-HflX-like GTPase superfamily. OBG GTPase family.

The protein resides in the mitochondrion. Functionally, hydrolyzes ATP, and can also hydrolyze GTP with lower efficiency. Has lower affinity for GTP. The polypeptide is Obg-like ATPase homolog (YLF2) (Saccharomyces cerevisiae (strain ATCC 204508 / S288c) (Baker's yeast)).